Here is a 607-residue protein sequence, read N- to C-terminus: Elongation factor 4 (607 aa).

Residues Ser-11–Thr-193 form the tr-type G domain. Residues Asp-23 to Thr-28 and Asn-140 to Asp-143 contribute to the GTP site.

It belongs to the TRAFAC class translation factor GTPase superfamily. Classic translation factor GTPase family. LepA subfamily.

The protein localises to the cell membrane. It catalyses the reaction GTP + H2O = GDP + phosphate + H(+). Required for accurate and efficient protein synthesis under certain stress conditions. May act as a fidelity factor of the translation reaction, by catalyzing a one-codon backward translocation of tRNAs on improperly translocated ribosomes. Back-translocation proceeds from a post-translocation (POST) complex to a pre-translocation (PRE) complex, thus giving elongation factor G a second chance to translocate the tRNAs correctly. Binds to ribosomes in a GTP-dependent manner. In Bacillus cereus (strain ATCC 10987 / NRS 248), this protein is Elongation factor 4.